Here is a 288-residue protein sequence, read N- to C-terminus: Probable pectinesterase 56 (288 aa).

Residues 1-27 (MAMTSTMQLLVLSFLVIASLFLGATVA) form the signal peptide. N-linked (GlcNAc...) asparagine glycosylation is found at Asn55 and Asn95. Substrate is bound by residues Thr120 and Gln150. Residue Asp173 is the Proton donor of the active site. Asp194 acts as the Nucleophile in catalysis. A glycan (N-linked (GlcNAc...) asparagine) is linked at Asn242. Substrate is bound by residues Arg262 and Trp264.

It belongs to the pectinesterase family.

It is found in the secreted. Its subcellular location is the cell wall. It catalyses the reaction [(1-&gt;4)-alpha-D-galacturonosyl methyl ester](n) + n H2O = [(1-&gt;4)-alpha-D-galacturonosyl](n) + n methanol + n H(+). It participates in glycan metabolism; pectin degradation; 2-dehydro-3-deoxy-D-gluconate from pectin: step 1/5. Acts in the modification of cell walls via demethylesterification of cell wall pectin. The protein is Probable pectinesterase 56 (PME56) of Arabidopsis thaliana (Mouse-ear cress).